Reading from the N-terminus, the 171-residue chain is Galectin-related protein A (171 aa).

Residues 38–170 (PFCGHIKGGL…INGDLQLTKL (133 aa)) form the Galectin domain.

Functionally, does not bind lactose, and may not bind carbohydrates. The polypeptide is Galectin-related protein A (lgalsl-a) (Xenopus laevis (African clawed frog)).